Here is a 254-residue protein sequence, read N- to C-terminus: Triosephosphate isomerase (254 aa).

Substrate is bound at residue N9 to K11. H96 functions as the Electrophile in the catalytic mechanism. E169 acts as the Proton acceptor in catalysis. Residues G175, S215, and G236–G237 contribute to the substrate site.

The protein belongs to the triosephosphate isomerase family. As to quaternary structure, homodimer.

Its subcellular location is the cytoplasm. It catalyses the reaction D-glyceraldehyde 3-phosphate = dihydroxyacetone phosphate. The protein operates within carbohydrate biosynthesis; gluconeogenesis. It participates in carbohydrate degradation; glycolysis; D-glyceraldehyde 3-phosphate from glycerone phosphate: step 1/1. Its function is as follows. Involved in the gluconeogenesis. Catalyzes stereospecifically the conversion of dihydroxyacetone phosphate (DHAP) to D-glyceraldehyde-3-phosphate (G3P). The chain is Triosephosphate isomerase from Borrelia hermsii (strain HS1 / DAH).